A 130-amino-acid chain; its full sequence is Small ribosomal subunit protein uS8 (130 aa).

Belongs to the universal ribosomal protein uS8 family. In terms of assembly, part of the 30S ribosomal subunit. Contacts proteins S5 and S12.

Its function is as follows. One of the primary rRNA binding proteins, it binds directly to 16S rRNA central domain where it helps coordinate assembly of the platform of the 30S subunit. This chain is Small ribosomal subunit protein uS8, found in Stutzerimonas stutzeri (strain A1501) (Pseudomonas stutzeri).